A 545-amino-acid polypeptide reads, in one-letter code: CTP synthase (545 aa).

The amidoligase domain stretch occupies residues 1-266 (MTTRYIFVTG…DELVTKRFGI (266 aa)). Position 14 (serine 14) interacts with CTP. Position 14 (serine 14) interacts with UTP. ATP contacts are provided by residues 15-20 (SLGKGI) and aspartate 72. Residues aspartate 72 and glutamate 140 each coordinate Mg(2+). Residues 147-149 (DIE), 187-192 (KTKPTQ), and lysine 223 contribute to the CTP site. UTP contacts are provided by residues 187–192 (KTKPTQ) and lysine 223. An ATP-binding site is contributed by 239–241 (KDV). The region spanning 291-542 (TIGMVGKYIE…VAAAAAHQKR (252 aa)) is the Glutamine amidotransferase type-1 domain. An L-glutamine-binding site is contributed by glycine 352. Cysteine 379 (nucleophile; for glutamine hydrolysis) is an active-site residue. Residues 380–383 (LGMQ), glutamate 403, and arginine 470 each bind L-glutamine. Residues histidine 515 and glutamate 517 contribute to the active site.

Belongs to the CTP synthase family. In terms of assembly, homotetramer.

It carries out the reaction UTP + L-glutamine + ATP + H2O = CTP + L-glutamate + ADP + phosphate + 2 H(+). The catalysed reaction is L-glutamine + H2O = L-glutamate + NH4(+). The enzyme catalyses UTP + NH4(+) + ATP = CTP + ADP + phosphate + 2 H(+). Its pathway is pyrimidine metabolism; CTP biosynthesis via de novo pathway; CTP from UDP: step 2/2. Allosterically activated by GTP, when glutamine is the substrate; GTP has no effect on the reaction when ammonia is the substrate. The allosteric effector GTP functions by stabilizing the protein conformation that binds the tetrahedral intermediate(s) formed during glutamine hydrolysis. Inhibited by the product CTP, via allosteric rather than competitive inhibition. In terms of biological role, catalyzes the ATP-dependent amination of UTP to CTP with either L-glutamine or ammonia as the source of nitrogen. Regulates intracellular CTP levels through interactions with the four ribonucleotide triphosphates. This chain is CTP synthase, found in Shewanella woodyi (strain ATCC 51908 / MS32).